The sequence spans 457 residues: Ribosomal protein uS12 methylthiotransferase RimO (457 aa).

An MTTase N-terminal domain is found at 6-116; it reads PKVGFVSLGC…VMEAVHAALP (111 aa). 6 residues coordinate [4Fe-4S] cluster: Cys-15, Cys-51, Cys-80, Cys-147, Cys-151, and Cys-154. Positions 133–370 constitute a Radical SAM core domain; sequence LTPRHYAYLK…MARQAEISAA (238 aa). The region spanning 373–441 is the TRAM domain; it reads EAKIGSVQQC…EHDLFGDALP (69 aa).

It belongs to the methylthiotransferase family. RimO subfamily. [4Fe-4S] cluster serves as cofactor.

The protein resides in the cytoplasm. It carries out the reaction L-aspartate(89)-[ribosomal protein uS12]-hydrogen + (sulfur carrier)-SH + AH2 + 2 S-adenosyl-L-methionine = 3-methylsulfanyl-L-aspartate(89)-[ribosomal protein uS12]-hydrogen + (sulfur carrier)-H + 5'-deoxyadenosine + L-methionine + A + S-adenosyl-L-homocysteine + 2 H(+). Catalyzes the methylthiolation of an aspartic acid residue of ribosomal protein uS12. This Xanthomonas campestris pv. campestris (strain 8004) protein is Ribosomal protein uS12 methylthiotransferase RimO.